The sequence spans 104 residues: Protein RnfH (104 aa).

Belongs to the UPF0125 (RnfH) family.

The sequence is that of Protein RnfH from Pseudomonas savastanoi pv. phaseolicola (strain 1448A / Race 6) (Pseudomonas syringae pv. phaseolicola (strain 1448A / Race 6)).